Here is a 547-residue protein sequence, read N- to C-terminus: Type I inositol polyphosphate 5-phosphatase 4 (547 aa).

A compositionally biased stretch (basic and acidic residues) spans 56–67; that stretch reads CSVRKSKTETRS. The disordered stretch occupies residues 56 to 80; that stretch reads CSVRKSKTETRSKRNSGRARRNKLD. Catalytic stretches follow at residues 387–402 and 467–482; these read DRVI…IALS and KRRT…WHGS.

The protein belongs to the inositol polyphosphate 5-phosphatase family.

In Arabidopsis thaliana (Mouse-ear cress), this protein is Type I inositol polyphosphate 5-phosphatase 4.